The chain runs to 274 residues: 2,3,4,5-tetrahydropyridine-2,6-dicarboxylate N-succinyltransferase (274 aa).

Residues R106 and D143 each coordinate substrate.

The protein belongs to the transferase hexapeptide repeat family. In terms of assembly, homotrimer.

Its subcellular location is the cytoplasm. It carries out the reaction (S)-2,3,4,5-tetrahydrodipicolinate + succinyl-CoA + H2O = (S)-2-succinylamino-6-oxoheptanedioate + CoA. The protein operates within amino-acid biosynthesis; L-lysine biosynthesis via DAP pathway; LL-2,6-diaminopimelate from (S)-tetrahydrodipicolinate (succinylase route): step 1/3. In Rickettsia conorii (strain ATCC VR-613 / Malish 7), this protein is 2,3,4,5-tetrahydropyridine-2,6-dicarboxylate N-succinyltransferase.